Reading from the N-terminus, the 342-residue chain is Aquaporin-7 (342 aa).

At 1–36 (MVQASGHRRSTRGSKMVSWSVIAKIQEILQRKMVRE) the chain is on the cytoplasmic side. Position 20 is a phosphoserine (Ser-20). The chain crosses the membrane as a helical span at residues 37–54 (FLAEFMSTYVMMVFGLGS). Residues 55–67 (VAHMVLNKKYGSY) are Extracellular-facing. The chain crosses the membrane as a helical span at residues 68–85 (LGVNLGFGFGVTMGVHVA). Over 86–89 (GRIS) the chain is Cytoplasmic. Residues 90–103 (GAHMNAAVTFANCA) constitute an intramembrane region (discontinuously helical). The short motif at 94-96 (NAA) is the NPA 1 element. Over 104–111 (LGRVPWRK) the chain is Cytoplasmic. Residues 112–132 (FPVYVLGQFLGSFLAAATIYS) traverse the membrane as a helical segment. At 133 to 170 (LFYTAILHFSGGQLMVTGPVATAGIFATYLPDHMTLWR) the chain is on the extracellular side. Residues 171-188 (GFLNEAWLTGMLQLCLFA) form a helical membrane-spanning segment. The Cytoplasmic segment spans residues 189-200 (ITDQENNPALPG). The chain crosses the membrane as a helical span at residues 201–217 (TEALVIGILVVIIGVSL). The Extracellular segment spans residues 218–221 (GMNT). An intramembrane region (discontinuously helical) is located at residues 222–235 (GYAINPSRDLPPRI). The NPA 2 signature appears at 226-228 (NPS). The Extracellular portion of the chain corresponds to 236–253 (FTFIAGWGKQVFSNGENW). A helical membrane pass occupies residues 254–275 (WWVPVVAPLLGAYLGGIIYLVF). Topologically, residues 276–342 (IGSTIPREPL…LHESMALEHF (67 aa)) are cytoplasmic.

This sequence belongs to the MIP/aquaporin (TC 1.A.8) family. In terms of assembly, homotetramer; each monomer provides an independent glycerol/water pore. Two homotetramers on opposing membranes can dimerize, forming a cell-cell junction. Interacts with PLIN1. Phosphorylation by PKA could prevent the interaction with PLIN1. As to expression, detected in the sperm head (at protein level). Detected in white adipose tissue.

The protein localises to the cell membrane. It is found in the cytoplasmic vesicle membrane. It localises to the lipid droplet. It carries out the reaction glycerol(in) = glycerol(out). It catalyses the reaction H2O(in) = H2O(out). The catalysed reaction is urea(in) = urea(out). Glycerol transport is regulated by pH, with the porin being permeable to glycerol at pH 7.4 but not at pH 5.5. Water permeability, however, is not influenced by pH. Inhibited by mercury ions. Functionally, aquaglyceroporins form homotetrameric transmembrane channels, with each monomer independently mediating glycerol and water transport across the plasma membrane along their osmotic gradient. Could also be permeable to urea. Mediates the efflux of glycerol, formed upon triglyceride hydrolysis, to avoid its accumulation in adipocytes and to make it available to other tissues. In the kidney, mediates the reabsorption of glycerol, preventing its loss in urine, again participating to energy homeostasis. In pancreatic beta cells, it also mediates the efflux of glycerol, regulating its intracellular levels. In Homo sapiens (Human), this protein is Aquaporin-7.